A 259-amino-acid chain; its full sequence is Polycomb group RING finger protein 1 (259 aa).

The RING-type zinc finger occupies 45–84; sequence CYLCAGYFIDATTITECLHTFCKSCIVKYLQTSKYCPLCN.

Component of a PRC1-like complex.

The protein localises to the nucleus. In terms of biological role, component of a Polycomb group (PcG) multiprotein PRC1-like complex, a complex class required to maintain the transcriptionally repressive state of many genes, including Hox genes, throughout development. PcG PRC1 complex acts via chromatin remodeling and modification of histones; it mediates monoubiquitination of histone H2A 'Lys-119', rendering chromatin heritably changed in its expressibility. The polypeptide is Polycomb group RING finger protein 1 (pcgf1) (Xenopus tropicalis (Western clawed frog)).